A 228-amino-acid chain; its full sequence is ATP synthase F(0) complex subunit a (228 aa).

The next 6 membrane-spanning stretches (helical) occupy residues 13 to 33 (YFLG…TMFI), 70 to 90 (WALL…TGLL), 100 to 120 (LSLN…MGAT), 140 to 160 (APFL…ALGV), 162 to 182 (LTAN…ALIN), and 190 to 210 (LFLT…VSFI).

Belongs to the ATPase A chain family. As to quaternary structure, component of the ATP synthase complex composed at least of ATP5F1A/subunit alpha, ATP5F1B/subunit beta, ATP5MC1/subunit c (homooctomer), MT-ATP6/subunit a, MT-ATP8/subunit 8, ATP5ME/subunit e, ATP5MF/subunit f, ATP5MG/subunit g, ATP5MK/subunit k, ATP5MJ/subunit j, ATP5F1C/subunit gamma, ATP5F1D/subunit delta, ATP5F1E/subunit epsilon, ATP5PF/subunit F6, ATP5PB/subunit b, ATP5PD/subunit d, ATP5PO/subunit OSCP. ATP synthase complex consists of a soluble F(1) head domain (subunits alpha(3) and beta(3)) - the catalytic core - and a membrane F(0) domain - the membrane proton channel (subunits c, a, 8, e, f, g, k and j). These two domains are linked by a central stalk (subunits gamma, delta, and epsilon) rotating inside the F1 region and a stationary peripheral stalk (subunits F6, b, d, and OSCP). Interacts with DNAJC30; interaction is direct.

Its subcellular location is the mitochondrion inner membrane. It carries out the reaction H(+)(in) = H(+)(out). Subunit a, of the mitochondrial membrane ATP synthase complex (F(1)F(0) ATP synthase or Complex V) that produces ATP from ADP in the presence of a proton gradient across the membrane which is generated by electron transport complexes of the respiratory chain. ATP synthase complex consist of a soluble F(1) head domain - the catalytic core - and a membrane F(1) domain - the membrane proton channel. These two domains are linked by a central stalk rotating inside the F(1) region and a stationary peripheral stalk. During catalysis, ATP synthesis in the catalytic domain of F(1) is coupled via a rotary mechanism of the central stalk subunits to proton translocation. With the subunit c (ATP5MC1), forms the proton-conducting channel in the F(0) domain, that contains two crucial half-channels (inlet and outlet) that facilitate proton movement from the mitochondrial intermembrane space (IMS) into the matrix. Protons are taken up via the inlet half-channel and released through the outlet half-channel, following a Grotthuss mechanism. This chain is ATP synthase F(0) complex subunit a, found in Myxine glutinosa (Atlantic hagfish).